The chain runs to 291 residues: 4-diphosphocytidyl-2-C-methyl-D-erythritol kinase (291 aa).

Residue lysine 8 is part of the active site. 89 to 99 is a binding site for ATP; it reads PIGSGIGGGSS. The active site involves aspartate 131.

It belongs to the GHMP kinase family. IspE subfamily.

It catalyses the reaction 4-CDP-2-C-methyl-D-erythritol + ATP = 4-CDP-2-C-methyl-D-erythritol 2-phosphate + ADP + H(+). Its pathway is isoprenoid biosynthesis; isopentenyl diphosphate biosynthesis via DXP pathway; isopentenyl diphosphate from 1-deoxy-D-xylulose 5-phosphate: step 3/6. Catalyzes the phosphorylation of the position 2 hydroxy group of 4-diphosphocytidyl-2C-methyl-D-erythritol. The chain is 4-diphosphocytidyl-2-C-methyl-D-erythritol kinase from Chlamydia abortus (strain DSM 27085 / S26/3) (Chlamydophila abortus).